A 454-amino-acid chain; its full sequence is MSTITLLCIALAGVIMLLLLVIKAKVQPFVALLLVSLLVALAAGIPAGEVGKVMIAGMGGVLGSVTIIIGLGAMLGRMIEHSGGAESLANYFSRKLGDKRTIAALTLAAFFLGIPVFFDVGFIILAPIIYGFAKVAKISPLKFGLPVAGIMLTVHVAVPPHPGPVAAAGLLHADIGWLTIIGIAISIPVGVVGYFAAKIINKRQYAMSVEVLEQMQLAPASEEGATKLSDKINPPGVALVTSLIVIPIAIIMAGTVSATLMPPSHPLLGTLQLIGSPMVALMIALVLAFWLLALRRGWSLQHTSDIMGSALPTAAVVILVTGAGGVFGKVLVESGVGKALANMLQMIDLPLLPAAFIISLALRASQGSATVAILTTGGLLSEAVMGLNPIQCVLVTLAACFGGLGASHINDSGFWIVTKYLGLSVADGLKTWTVLTTILGFTGFLITWCVWAVI.

Position 1 (methionine 1) is a topological domain, periplasmic. A helical transmembrane segment spans residues 2–22 (STITLLCIALAGVIMLLLLVI). At 23-27 (KAKVQ) the chain is on the cytoplasmic side. A helical membrane pass occupies residues 28–48 (PFVALLLVSLLVALAAGIPAG). Residues 49–52 (EVGK) lie on the Periplasmic side of the membrane. A helical transmembrane segment spans residues 53–73 (VMIAGMGGVLGSVTIIIGLGA). The Cytoplasmic segment spans residues 74-108 (MLGRMIEHSGGAESLANYFSRKLGDKRTIAALTLA). A helical transmembrane segment spans residues 109-129 (AFFLGIPVFFDVGFIILAPII). Topologically, residues 130–137 (YGFAKVAK) are periplasmic. A helical transmembrane segment spans residues 138 to 158 (ISPLKFGLPVAGIMLTVHVAV). The Cytoplasmic portion of the chain corresponds to 159 to 174 (PPHPGPVAAAGLLHAD). The helical transmembrane segment at 175-195 (IGWLTIIGIAISIPVGVVGYF) threads the bilayer. Over 196–235 (AAKIINKRQYAMSVEVLEQMQLAPASEEGATKLSDKINPP) the chain is Periplasmic. A helical transmembrane segment spans residues 236–256 (GVALVTSLIVIPIAIIMAGTV). The Cytoplasmic portion of the chain corresponds to 257 to 273 (SATLMPPSHPLLGTLQL). The helical transmembrane segment at 274–294 (IGSPMVALMIALVLAFWLLAL) threads the bilayer. Residues 295-305 (RRGWSLQHTSD) lie on the Periplasmic side of the membrane. Residues 306–326 (IMGSALPTAAVVILVTGAGGV) traverse the membrane as a helical segment. Topologically, residues 327-341 (FGKVLVESGVGKALA) are cytoplasmic. A helical membrane pass occupies residues 342 to 362 (NMLQMIDLPLLPAAFIISLAL). Over 363-383 (RASQGSATVAILTTGGLLSEA) the chain is Periplasmic. The helical transmembrane segment at 384-404 (VMGLNPIQCVLVTLAACFGGL) threads the bilayer. Residues 405–433 (GASHINDSGFWIVTKYLGLSVADGLKTWT) lie on the Cytoplasmic side of the membrane. The helical transmembrane segment at 434-454 (VLTTILGFTGFLITWCVWAVI) threads the bilayer.

Belongs to the GntP permease family.

The protein localises to the cell inner membrane. This chain is Inner membrane permease YgbN (ygbN), found in Escherichia coli (strain K12).